A 507-amino-acid chain; its full sequence is MHKIDRKIPNIMGTQHPDNAGVPFFKGDQSKNPFITAYKEVDEAFNNFAVLDTDEYMWDWEGKHADAAVIDRLYSEHYEYFKGHQLGRDKFLTFRLPNIWEEKGYSLMQAMTTMLSAEDFARDLSFEQRPLFEAILPMAQTSEQLIEIEDKFSKLAHFKSDEFTSGSNNTDHIEMIPLFEGFKTQLHSPEILKEYLQLYEQRTGQSLPYLRVFLAGSDSALSNGFMNSIIGNKLALTRLHEFSDQKDLPIFPIAGTGSTIFRGGLSPKWIKRYLQEFPGLKTATVQSAFRYDYPLKQVQSAIKELRSGLQNNQAVSMTDREQNVLINVAKKSADCYHETLDQLINDLQKIFDAFPKRRDRRQHVGILGYSRQVDGYKMPRAITFTGSLYSVGVPPEFIGFGRALMSLNAEELAIFTRHYPNLRNDFTFLAHYISVDALESLIAKNPAWLEAKKDIQDLQSILQFEIGPSNEKEEEHSRLASDLVKISDPTTRTLLIQKQAVLRNFLG.

The tract at residues 1-25 (MHKIDRKIPNIMGTQHPDNAGVPFF) is disordered.

Belongs to the PEPCase type 2 family. In terms of assembly, homotetramer. It depends on Mg(2+) as a cofactor.

The enzyme catalyses oxaloacetate + phosphate = phosphoenolpyruvate + hydrogencarbonate. Its function is as follows. Catalyzes the irreversible beta-carboxylation of phosphoenolpyruvate (PEP) to form oxaloacetate (OAA), a four-carbon dicarboxylic acid source for the tricarboxylic acid cycle. The chain is Phosphoenolpyruvate carboxylase from Oenococcus oeni (strain ATCC BAA-331 / PSU-1).